Reading from the N-terminus, the 481-residue chain is Aspartyl/glutamyl-tRNA(Asn/Gln) amidotransferase subunit B (481 aa).

The protein belongs to the GatB/GatE family. GatB subfamily. Heterotrimer of A, B and C subunits.

The catalysed reaction is L-glutamyl-tRNA(Gln) + L-glutamine + ATP + H2O = L-glutaminyl-tRNA(Gln) + L-glutamate + ADP + phosphate + H(+). It catalyses the reaction L-aspartyl-tRNA(Asn) + L-glutamine + ATP + H2O = L-asparaginyl-tRNA(Asn) + L-glutamate + ADP + phosphate + 2 H(+). In terms of biological role, allows the formation of correctly charged Asn-tRNA(Asn) or Gln-tRNA(Gln) through the transamidation of misacylated Asp-tRNA(Asn) or Glu-tRNA(Gln) in organisms which lack either or both of asparaginyl-tRNA or glutaminyl-tRNA synthetases. The reaction takes place in the presence of glutamine and ATP through an activated phospho-Asp-tRNA(Asn) or phospho-Glu-tRNA(Gln). The chain is Aspartyl/glutamyl-tRNA(Asn/Gln) amidotransferase subunit B from Pseudomonas putida (strain ATCC 700007 / DSM 6899 / JCM 31910 / BCRC 17059 / LMG 24140 / F1).